We begin with the raw amino-acid sequence, 101 residues long: Large ribosomal subunit protein uL23 (101 aa).

It belongs to the universal ribosomal protein uL23 family. Part of the 50S ribosomal subunit. Contacts protein L29, and trigger factor when it is bound to the ribosome.

Functionally, one of the early assembly proteins it binds 23S rRNA. One of the proteins that surrounds the polypeptide exit tunnel on the outside of the ribosome. Forms the main docking site for trigger factor binding to the ribosome. This is Large ribosomal subunit protein uL23 from Micrococcus luteus (strain ATCC 4698 / DSM 20030 / JCM 1464 / CCM 169 / CCUG 5858 / IAM 1056 / NBRC 3333 / NCIMB 9278 / NCTC 2665 / VKM Ac-2230) (Micrococcus lysodeikticus).